Reading from the N-terminus, the 203-residue chain is Glycerol-3-phosphate acyltransferase (203 aa).

Transmembrane regions (helical) follow at residues 5 to 25, 55 to 75, 88 to 108, 114 to 134, and 162 to 182; these read VLGL…FGVV, KLGI…ILVA, FTVL…WLGF, VATG…AGAV, and FVAH…AALI.

This sequence belongs to the PlsY family. As to quaternary structure, probably interacts with PlsX.

It localises to the cell inner membrane. The catalysed reaction is an acyl phosphate + sn-glycerol 3-phosphate = a 1-acyl-sn-glycero-3-phosphate + phosphate. It participates in lipid metabolism; phospholipid metabolism. Catalyzes the transfer of an acyl group from acyl-phosphate (acyl-PO(4)) to glycerol-3-phosphate (G3P) to form lysophosphatidic acid (LPA). This enzyme utilizes acyl-phosphate as fatty acyl donor, but not acyl-CoA or acyl-ACP. The protein is Glycerol-3-phosphate acyltransferase of Anaeromyxobacter sp. (strain Fw109-5).